Here is a 180-residue protein sequence, read N- to C-terminus: Small ribosomal subunit protein uS5 (180 aa).

The S5 DRBM domain maps to 24–87 (MIEKLVAVNR…EQARKNLVSV (64 aa)).

Belongs to the universal ribosomal protein uS5 family. Part of the 30S ribosomal subunit. Contacts proteins S4 and S8.

Its function is as follows. With S4 and S12 plays an important role in translational accuracy. In terms of biological role, located at the back of the 30S subunit body where it stabilizes the conformation of the head with respect to the body. The polypeptide is Small ribosomal subunit protein uS5 (Stenotrophomonas maltophilia (strain R551-3)).